A 192-amino-acid chain; its full sequence is MYQDLIRGELTEAADTLSRFLQDDANIEAIQKAAVLLADSFKAGGKVLSCGNGGSHCDAMHFAEELTGRYRENRPGYPAIAISDVSHISCVSNDFGYEYVFSRYVEAVGKEGDVLLGISTSGNSGNIIKAISAAREKGMKVITLTGKDGGKMAGSADIEIRVPHFGYADRIQEIHIKVIHILIQLIEKEMEK.

Residues 37-192 (LADSFKAGGK…IQLIEKEMEK (156 aa)) enclose the SIS domain. 52 to 54 (NGG) contributes to the substrate binding site. The Zn(2+) site is built by His-61 and Glu-65. Substrate-binding positions include Glu-65, 93 to 94 (ND), 119 to 121 (STS), Ser-124, and Gln-172. 2 residues coordinate Zn(2+): Gln-172 and His-180.

The protein belongs to the SIS family. GmhA subfamily. In terms of assembly, homotetramer. Requires Zn(2+) as cofactor.

The protein resides in the cytoplasm. The enzyme catalyses 2 D-sedoheptulose 7-phosphate = D-glycero-alpha-D-manno-heptose 7-phosphate + D-glycero-beta-D-manno-heptose 7-phosphate. It participates in carbohydrate biosynthesis; D-glycero-D-manno-heptose 7-phosphate biosynthesis; D-glycero-alpha-D-manno-heptose 7-phosphate and D-glycero-beta-D-manno-heptose 7-phosphate from sedoheptulose 7-phosphate: step 1/1. Its function is as follows. Catalyzes the isomerization of sedoheptulose 7-phosphate in D-glycero-D-manno-heptose 7-phosphate. This chain is Phosphoheptose isomerase, found in Proteus mirabilis (strain HI4320).